The chain runs to 319 residues: Lambda-crystallin homolog (319 aa).

Ala2 is modified (N-acetylalanine). Ser3 bears the Phosphoserine mark. NAD(+) contacts are provided by residues 16-17 (LI), Asp36, Glu97, and Lys102.

This sequence belongs to the 3-hydroxyacyl-CoA dehydrogenase family. In terms of assembly, homodimer. As to expression, widely expressed, with highest levels in liver. Undetectable in skeletal muscle.

It localises to the cytoplasm. It carries out the reaction L-gulonate + NAD(+) = 3-dehydro-L-gulonate + NADH + H(+). Its activity is regulated as follows. Inhibited by malonate. Its function is as follows. Has high L-gulonate 3-dehydrogenase activity. It also exhibits low dehydrogenase activity toward L-3-hydroxybutyrate (HBA) and L-threonate. The protein is Lambda-crystallin homolog (Cryl1) of Mus musculus (Mouse).